We begin with the raw amino-acid sequence, 335 residues long: Type 1 fimbrin D-mannose specific adhesin (335 aa).

A signal peptide spans M1–A22.

Belongs to the fimbrial protein family.

It localises to the fimbrium. In terms of biological role, involved in regulation of length and mediation of adhesion of type 1 fimbriae (but not necessary for the production of fimbriae). A mannose-binding adhesin. The protein is Type 1 fimbrin D-mannose specific adhesin (fimH) of Salmonella typhimurium (strain LT2 / SGSC1412 / ATCC 700720).